A 31-amino-acid polypeptide reads, in one-letter code: Cliotide T11 (31 aa).

Residues 1-31 (GIPCGESCVFIPCTITALLGCSCKDKVCYKN) constitute a cross-link (cyclopeptide (Gly-Asn)). 3 cysteine pairs are disulfide-bonded: cysteine 4/cysteine 21, cysteine 8/cysteine 23, and cysteine 13/cysteine 28.

Contains 3 disulfide bonds. Post-translationally, this is a cyclic peptide. Expressed in seed but not in root, nodule, flower, stem, shoot, leaf and pod (at protein level).

Probably participates in a plant defense mechanism. The sequence is that of Cliotide T11 from Clitoria ternatea (Butterfly pea).